The sequence spans 312 residues: Methionyl-tRNA formyltransferase (312 aa).

110-113 is a binding site for (6S)-5,6,7,8-tetrahydrofolate; sequence SLLP.

This sequence belongs to the Fmt family.

It carries out the reaction L-methionyl-tRNA(fMet) + (6R)-10-formyltetrahydrofolate = N-formyl-L-methionyl-tRNA(fMet) + (6S)-5,6,7,8-tetrahydrofolate + H(+). Functionally, attaches a formyl group to the free amino group of methionyl-tRNA(fMet). The formyl group appears to play a dual role in the initiator identity of N-formylmethionyl-tRNA by promoting its recognition by IF2 and preventing the misappropriation of this tRNA by the elongation apparatus. This Streptococcus suis (strain 05ZYH33) protein is Methionyl-tRNA formyltransferase.